Consider the following 108-residue polypeptide: MMKGGMAGLMKQAQQMQEKMQKMQEELANAEVTGQSGAGLVSVVMTGRHDVKRVSLDDSLMQEDKEILEDLIAAAVNDAVRKIEQNNQEKMSGFTSGMQLPPGFKMPF.

Disordered regions lie at residues 1-25 (MMKGGMAGLMKQAQQMQEKMQKMQE) and 87-108 (NQEKMSGFTSGMQLPPGFKMPF). Positions 87–98 (NQEKMSGFTSGM) are enriched in polar residues.

It belongs to the YbaB/EbfC family. As to quaternary structure, homodimer.

Its subcellular location is the cytoplasm. It is found in the nucleoid. Functionally, binds to DNA and alters its conformation. May be involved in regulation of gene expression, nucleoid organization and DNA protection. In Pseudomonas aeruginosa (strain LESB58), this protein is Nucleoid-associated protein PLES_37951.